A 365-amino-acid polypeptide reads, in one-letter code: Geranylgeranyl pyrophosphate synthase (365 aa).

Over residues 1 to 11 (MKPLPSTNGKV) the composition is skewed to polar residues. Residues 1-36 (MKPLPSTNGKVNGNGKHHDSSLSSTSSTSSSSSSDT) form a disordered region. Over residues 21–34 (SLSSTSSTSSSSSS) the composition is skewed to low complexity. Residues Lys-78, Arg-81, and His-110 each contribute to the isopentenyl diphosphate site. Positions 117 and 121 each coordinate Mg(2+). Arg-126 is a dimethylallyl diphosphate binding site. Arg-127 contributes to the isopentenyl diphosphate binding site. Dimethylallyl diphosphate-binding residues include Lys-211, Thr-212, and Gln-247. Position 250 (Asp-250) interacts with Mg(2+). The dimethylallyl diphosphate site is built by Asn-254, Lys-263, and Lys-273.

The protein belongs to the FPP/GGPP synthase family. Mg(2+) serves as cofactor.

It catalyses the reaction isopentenyl diphosphate + dimethylallyl diphosphate = (2E)-geranyl diphosphate + diphosphate. It carries out the reaction isopentenyl diphosphate + (2E)-geranyl diphosphate = (2E,6E)-farnesyl diphosphate + diphosphate. The catalysed reaction is isopentenyl diphosphate + (2E,6E)-farnesyl diphosphate = (2E,6E,10E)-geranylgeranyl diphosphate + diphosphate. In terms of biological role, geranylgeranyl pyrophosphate synthase that catalyzes the trans-addition of the three molecules of IPP onto DMAPP to form geranylgeranyl pyrophosphate. Does not show any monoterpene nor sesquiterpene synthase activity. This chain is Geranylgeranyl pyrophosphate synthase, found in Melampsora lini (Rust fungus).